The primary structure comprises 109 residues: Major allergen I polypeptide chain 2 (109 aa).

The N-terminal stretch at 1–17 is a signal peptide; it reads MRGALLVLALLVTQALG. Asn-50 carries N-linked (GlcNAc...) asparagine glycosylation.

Belongs to the secretoglobin family. In terms of assembly, heterotetramer composed of two non-covalently linked disulfide-linked heterodimer of chains 1 and 2. The long form is preferentially expressed in the salivary gland, while the short form is preferentially expressed in the skin.

The protein localises to the secreted. The polypeptide is Major allergen I polypeptide chain 2 (CH2) (Felis catus (Cat)).